Reading from the N-terminus, the 263-residue chain is L-aspartate dehydrogenase (263 aa).

Ala-120 and Asn-186 together coordinate NAD(+). The active site involves His-216.

This sequence belongs to the L-aspartate dehydrogenase family.

It carries out the reaction L-aspartate + NADP(+) + H2O = oxaloacetate + NH4(+) + NADPH + H(+). The catalysed reaction is L-aspartate + NAD(+) + H2O = oxaloacetate + NH4(+) + NADH + H(+). It participates in cofactor biosynthesis; NAD(+) biosynthesis; iminoaspartate from L-aspartate (dehydrogenase route): step 1/1. Functionally, specifically catalyzes the NAD or NADP-dependent dehydrogenation of L-aspartate to iminoaspartate. In Acinetobacter baylyi (strain ATCC 33305 / BD413 / ADP1), this protein is L-aspartate dehydrogenase.